Here is a 361-residue protein sequence, read N- to C-terminus: Peptide chain release factor 1 (361 aa).

At Gln-236 the chain carries N5-methylglutamine. The segment covering 285-309 has biased composition (basic and acidic residues); the sequence is TAKDSARAADRKAQVGSGDRSERIR. A disordered region spans residues 285 to 313; sequence TAKDSARAADRKAQVGSGDRSERIRTYNF.

The protein belongs to the prokaryotic/mitochondrial release factor family. Methylated by PrmC. Methylation increases the termination efficiency of RF1.

It is found in the cytoplasm. Its function is as follows. Peptide chain release factor 1 directs the termination of translation in response to the peptide chain termination codons UAG and UAA. The sequence is that of Peptide chain release factor 1 from Methylorubrum populi (strain ATCC BAA-705 / NCIMB 13946 / BJ001) (Methylobacterium populi).